A 205-amino-acid polypeptide reads, in one-letter code: GTP cyclohydrolase-2 (205 aa).

Residue 49–53 (RLHSE) participates in GTP binding. The Zn(2+) site is built by Cys-54, Cys-65, and Cys-67. GTP contacts are provided by residues Gln-70, 92–94 (EGR), and Thr-114. Catalysis depends on Asp-126, which acts as the Proton acceptor. The active-site Nucleophile is the Arg-128. Positions 149 and 154 each coordinate GTP.

Belongs to the GTP cyclohydrolase II family. It depends on Zn(2+) as a cofactor.

It carries out the reaction GTP + 4 H2O = 2,5-diamino-6-hydroxy-4-(5-phosphoribosylamino)-pyrimidine + formate + 2 phosphate + 3 H(+). It functions in the pathway cofactor biosynthesis; riboflavin biosynthesis; 5-amino-6-(D-ribitylamino)uracil from GTP: step 1/4. Its function is as follows. Catalyzes the conversion of GTP to 2,5-diamino-6-ribosylamino-4(3H)-pyrimidinone 5'-phosphate (DARP), formate and pyrophosphate. The protein is GTP cyclohydrolase-2 of Pseudomonas aeruginosa (strain LESB58).